Consider the following 276-residue polypeptide: MVVKIGIIRCGNIGTSPVLDLLLDERADRPNIDVCVVGSGAKMNPDEIERAVPTMLEMDRDFVIFISPNPGAPGPAKARELLSEADVPAMIIGDAPGLRVKDEIEEQGLGYIIVKADPMIGARREFLDPTEMASFNSDVIKVLAFTGAYRVVQNTIDAMIADVEAGKAPELPQVVIDTDVAVEAAGYENPYAKAKAMAAYEIATKVADIDVKGCFMVQDPDKYIPIVASAHEMLAAAAKLAVEAREIEKANDTVLRTPHGKEGETLSKTDLLAKPE.

The segment at 257-276 is disordered; it reads TPHGKEGETLSKTDLLAKPE. Positions 259–276 are enriched in basic and acidic residues; it reads HGKEGETLSKTDLLAKPE.

This sequence belongs to the MTD family.

It carries out the reaction 5,10-methylenetetrahydromethanopterin + oxidized coenzyme F420-(gamma-L-Glu)(n) + 2 H(+) = 5,10-methenyl-5,6,7,8-tetrahydromethanopterin + reduced coenzyme F420-(gamma-L-Glu)(n). The protein operates within one-carbon metabolism; methanogenesis from CO(2); 5,10-methylene-5,6,7,8-tetrahydromethanopterin from 5,10-methenyl-5,6,7,8-tetrahydromethanopterin (coenzyme F420 route): step 1/1. Its function is as follows. Catalyzes the reversible reduction of methenyl-H(4)MPT(+) to methylene-H(4)MPT. The polypeptide is F420-dependent methylenetetrahydromethanopterin dehydrogenase (mtd) (Methanothermobacter thermautotrophicus (strain ATCC 29096 / DSM 1053 / JCM 10044 / NBRC 100330 / Delta H) (Methanobacterium thermoautotrophicum)).